The primary structure comprises 282 residues: Blarina toxin (282 aa).

The signal sequence occupies residues 1–17 (MCFLLLCLTLTLAGTGA). The propeptide at 18–29 (VPTGPSIEIHSR) is activation peptide. The Peptidase S1 domain maps to 30–279 (IIGGWECDKH…YISWIQETIK (250 aa)). Cystine bridges form between Cys-36–Cys-194, Cys-57–Cys-73, Cys-170–Cys-240, Cys-205–Cys-219, and Cys-230–Cys-255. The active-site Charge relay system is the His-72. The O-linked (GalNAc...) serine glycan is linked to Ser-100. Asn-109 and Asn-122 each carry an N-linked (GlcNAc...) asparagine glycan. Asp-138 acts as the Charge relay system in catalysis. Catalysis depends on Ser-234, which acts as the Charge relay system.

Belongs to the peptidase S1 family. Kallikrein subfamily. Submaxillary and sublingual salivary glands.

It localises to the secreted. Strongly inhibited by aprotinin, moderately inhibited by secretory leukoprotease inhibitor, the Kunitz-type soybean trypsin inhibitor, and leupeptin, and not inhibited by urinary trypsin inhibitor or alpha-1 protease inhibitor. Its function is as follows. Has kallikrein-like activity, converts kininogens to kinins, and has dilatory effects on the blood vessel walls. Shows highest activity toward Pro-Phe-Arg-MCA and Boc-Val-Leu-Lys-MCA in vitro. Has preference for Arg and Lys in position P1 and hydrophobic residues in position P2. The chain is Blarina toxin (BTX) from Blarina brevicauda (Northern short-tailed shrew).